The chain runs to 573 residues: Multidrug and toxin extrusion protein 2 (573 aa).

Residues 1–46 (MEPAEDSLGATIQPPELVRVPRGRSLRILLGLRGALSPDVRREAAA) lie on the Cytoplasmic side of the membrane. A helical transmembrane segment spans residues 47-67 (LVALAGPVFLAQLMIFLISIV). Residues 68-81 (SSIFCGHLGKVELD) lie on the Extracellular side of the membrane. Residues 82–102 (AVTLAVSVVNVTGISVGTGLA) traverse the membrane as a helical segment. Over 103-122 (SACDTLMSQSFGGKNLKRVG) the chain is Cytoplasmic. A helical membrane pass occupies residues 123–143 (VILQRGILILLLCCFPCWAIF). Residues 144 to 161 (LNTERLLLLLRQDPDVAR) lie on the Extracellular side of the membrane. Residues 162-182 (LAQVYVMICIPALPAAFLFQL) form a helical membrane-spanning segment. Residues 183 to 196 (QTRYLQSQGIIMPQ) are Cytoplasmic-facing. A helical transmembrane segment spans residues 197 to 217 (VIVGIAANVVNVGMNAFLLYA). The Extracellular segment spans residues 218-225 (LDLGVVGS). A helical transmembrane segment spans residues 226–246 (AWANTTSQFFLSALLFLYVWW). Residues 247-266 (KRIHIHTWGGWTRECFQEWS) are Cytoplasmic-facing. The helical transmembrane segment at 267–286 (SYTRLAIPSMFMVCIEWWTF) threads the bilayer. Residues 287–304 (EIGTFLAGLVNVTELGAQ) lie on the Extracellular side of the membrane. Residues 305 to 325 (AVIYELASVAYMVPFGFGVAA) traverse the membrane as a helical segment. Residues 326–345 (SVRVGNALGAGNADQARCSC) are Cytoplasmic-facing. A helical transmembrane segment spans residues 346 to 366 (TTVLLCAGVCALLVGILLAAL). The Extracellular segment spans residues 367–379 (KDVVAYIFTNDKD). Residues 380–400 (IISLVSQVMPIFAPFHLFDAL) form a helical membrane-spanning segment. The Cytoplasmic portion of the chain corresponds to 401 to 415 (AGTCGGVLRGTGKQK). A helical transmembrane segment spans residues 416–436 (IGAVLNTIGYYGFGFPIGVSL). Residues 437–443 (MFAAKLG) are Extracellular-facing. A helical transmembrane segment spans residues 444–464 (IIGLWAGLIVCVSFQAFSYLI). The Cytoplasmic segment spans residues 465 to 545 (YILRTNWSRV…VGEVLTGRQL (81 aa)). A helical membrane pass occupies residues 546 to 566 (VFYRGMALTVSVAVLIAGIVV). Residues 567–573 (RVFNDRG) lie on the Extracellular side of the membrane.

Belongs to the multi antimicrobial extrusion (MATE) (TC 2.A.66.1) family. As to expression, expressed in testis; especially in testicular Leydig cells.

The protein localises to the cell membrane. Multidrug efflux pump that functions as a H(+)/organic cation antiporter. May mediate testosterone efflux from the Leydig cells in the testes. This chain is Multidrug and toxin extrusion protein 2 (Slc47a2), found in Mus musculus (Mouse).